Reading from the N-terminus, the 248-residue chain is tRNA pseudouridine synthase A (248 aa).

The active-site Nucleophile is the D53. Y111 is a binding site for substrate.

The protein belongs to the tRNA pseudouridine synthase TruA family. In terms of assembly, homodimer.

It catalyses the reaction uridine(38/39/40) in tRNA = pseudouridine(38/39/40) in tRNA. In terms of biological role, formation of pseudouridine at positions 38, 39 and 40 in the anticodon stem and loop of transfer RNAs. This is tRNA pseudouridine synthase A from Listeria welshimeri serovar 6b (strain ATCC 35897 / DSM 20650 / CCUG 15529 / CIP 8149 / NCTC 11857 / SLCC 5334 / V8).